Reading from the N-terminus, the 692-residue chain is Hexamerin-1.1 (692 aa).

The signal sequence occupies residues 1 to 18 (MKLLILAVAISLAVLASG). The N-linked (GlcNAc...) asparagine glycan is linked to Asn203.

It belongs to the hemocyanin family. In terms of assembly, homohexamer. As to expression, larval fat body.

Its subcellular location is the secreted. The protein localises to the extracellular space. In terms of biological role, larval storage protein (LSP) which may serve as a store of amino acids for synthesis of adult proteins. The sequence is that of Hexamerin-1.1 (HexA) from Anopheles gambiae (African malaria mosquito).